Reading from the N-terminus, the 233-residue chain is Tapetum-specific methyltransferase 1 (233 aa).

Position 8 (lysine 8) interacts with substrate. S-adenosyl-L-methionine-binding positions include valine 52, glutamate 74, 76–77 (GV), serine 82, aspartate 100, and alanine 129. Position 150 (aspartate 150) interacts with substrate. Aspartate 150 is an a divalent metal cation binding site. Aspartate 152 serves as a coordination point for S-adenosyl-L-methionine. Aspartate 176 and asparagine 177 together coordinate a divalent metal cation.

This sequence belongs to the class I-like SAM-binding methyltransferase superfamily. Cation-dependent O-methyltransferase family. CCoAMT subfamily. The cofactor is a divalent metal cation. As to expression, expressed in inflorescences and flower buds. Not detected in roots, leaves or stems. Located exclusively in the tapetum of developing stamen.

It participates in aromatic compound metabolism; phenylpropanoid biosynthesis. Methyltransferase involved in phenylpropanoid polyamine conjugate biosynthesis. In vivo, methylates only one of the 5-hydroxyferuloyl moieties of N1,N5,N10-tri-(hydroxyferuloyl)-spermidine, while is able in vitro to convert all three 5-hydroxyferuloyl residues to the corresponding sinapoyl moieties and to methylate caffeoyl CoA and tricaffeoyl spermidine. The polypeptide is Tapetum-specific methyltransferase 1 (TSM1) (Arabidopsis thaliana (Mouse-ear cress)).